Reading from the N-terminus, the 195-residue chain is MLHKILFLICLASFIPTIGSISGTKDVKSKNCDGSAGLTCTFPGDCRIGDTVKVNCTSRKGCPNPVSRNNVEAVCRFCWQLLPGDYDCEPATNCSTSSTKLLVTKCSAHSSVICMGQRNFYKRIPCNWSSGYSWTKTMILSVVLGGFGADRFYLGLWKSAIGKLFSFGGLGVWTLVDVVLIAVGYIKPYDGSMYI.

An N-terminal signal peptide occupies residues 1–20 (MLHKILFLICLASFIPTIGS). The Extracellular segment spans residues 21–136 (ISGTKDVKSK…NWSSGYSWTK (116 aa)). N-linked (GlcNAc...) asparagine glycans are attached at residues Asn55, Asn93, and Asn127. The region spanning 131–179 (GYSWTKTMILSVVLGGFGADRFYLGLWKSAIGKLFSFGGLGVWTLVDVV) is the TM2 domain. The helical transmembrane segment at 137–157 (TMILSVVLGGFGADRFYLGLW) threads the bilayer. Residues 158-163 (KSAIGK) lie on the Cytoplasmic side of the membrane. Residues 164-184 (LFSFGGLGVWTLVDVVLIAVG) form a helical membrane-spanning segment. Residues 185–195 (YIKPYDGSMYI) are Extracellular-facing.

The protein belongs to the TM2 family.

The protein resides in the membrane. The sequence is that of TM2 domain-containing protein C41D11.9 from Caenorhabditis elegans.